Reading from the N-terminus, the 429-residue chain is FAD-dependent monooxygenase azaH (429 aa).

Residues 5-25 (SIEVAIIGAGITGITLALGLL) form a helical membrane-spanning segment. The FAD site is built by E35 and G48. N75 and N87 each carry an N-linked (GlcNAc...) asparagine glycan. R116 contributes to the FAD binding site. Residue R199 is part of the active site. FAD contacts are provided by D315 and A328.

The protein belongs to the paxM FAD-dependent monooxygenase family. FAD serves as cofactor.

The protein localises to the membrane. It functions in the pathway secondary metabolite biosynthesis. Its function is as follows. FAD-dependent monooxygenase; part of the gene cluster that mediates the biosynthesis of azaphilones, a class of fungal metabolites characterized by a highly oxygenated pyrano-quinone bicyclic core and exhibiting a broad range of bioactivities. In the first step, the non-reducing polyketide synthase azaA forms the hexaketide precursor from successive condensations of five malonyl-CoA units, presumably with a simple acetyl-CoA starter unit. The reactive polyketide chain then undergoes a PT-mediated C2-C7 cyclization to afford the aromatic ring and is eventually released as an aldehyde through the R-domain. The putative ketoreductase azaE is proposed to catalyze the reduction of the terminal ketone resulting in the early culture product FK17-P2a. The monooxygenase azaH was demonstrated to be the only enzyme required to convert FK17-P2a to azanigerone E. AzaH first hydroxylates the benzaldehyde intermediate FK17-P2a at C4, which triggers the formation of the pyran-ring to afford azanigerone E. In parallel, the 2,4-dimethylhexanoyl chain is synthesized by the HR-PKS azaB and is proposed to be transferred to the C4-hydroxyl of azanigerone E by the acyltransferase azaD directly from the ACP domain of azaB. Alternatively, the 2,4-dimethyl-hexanoyl chain may be offloaded from the HR-PKS as a carboxylic acid and converted to an acyl-CoA by azaF. The resulting acyl-CoA molecule could then be taken up as a substrate by AzaD to form azanigerone B. To yield the carboxylic acid substituent in azanigerone A, the hydroxypropyl side chain of azanigerone B would need to undergo a C-C oxidative cleavage catalyzed by cytochrome P450 AzaI. AzaI is proposed to act on a vicinal diol that leads to a C-C bond scission either through an alkoxyradical intermediate or a peroxy complex. In the biosynthesis of azanigerone A, azanigerone B first undergoes hydroxylation at C10, possibly catalyzed by one of the two FAD-dependent monooxygenases encoded in the cluster, azaG or azaL, resulting in the vicinal diol azanigerone C. Oxidative cleavage of azanigerone C by azaI would yield the corresponding aldehyde derivative of azanigerone A. Finally, the dehydrogenase azaJ is proposed to convert the aldehyde functional group into the carboxylic acid, completing the conversion from azanigerone B to azanigerone A. Alternatively, the oxidation of aldehyde to carboxylic acid may be catalyzed by the same P450 enzyme azaI via consecutive oxidation or by endogenous alcohol dehydrogenase. The sequence is that of FAD-dependent monooxygenase azaH from Aspergillus niger (strain ATCC 1015 / CBS 113.46 / FGSC A1144 / LSHB Ac4 / NCTC 3858a / NRRL 328 / USDA 3528.7).